An 879-amino-acid chain; its full sequence is Translation initiation factor IF-2 (879 aa).

Residues 48–261 form a disordered region; that stretch reads EAFPPPPEPA…RPHKSKKQRR (214 aa). Residues 82 to 111 show a composition bias toward low complexity; that stretch reads PAADAAAPPAVTTPPSAAPAGATTSAPSDA. 3 stretches are compositionally biased toward pro residues: residues 119 to 142, 152 to 163, and 173 to 197; these read PPRP…PSGP, SPMPRPMPPRPV, and PGIP…PPRP. A compositionally biased stretch (low complexity) spans 198-213; that stretch reads AAGRAAPGRGAPIRLP. The segment covering 228 to 246 has biased composition (gly residues); it reads PGVGGRGRGAPGGAFGRGP. Over residues 251-260 the composition is skewed to basic residues; that stretch reads SRPHKSKKQR. The tr-type G domain occupies 372 to 543; the sequence is PRPPVVTVMG…AILLTADAAL (172 aa). A G1 region spans residues 381–388; that stretch reads GHVDHGKT. 381–388 provides a ligand contact to GTP; that stretch reads GHVDHGKT. A G2 region spans residues 406–410; sequence GITQH. The tract at residues 431–434 is G3; the sequence is DTPG. GTP contacts are provided by residues 431-435 and 485-488; these read DTPGH and NKID. The segment at 485–488 is G4; it reads NKID. Residues 521–523 form a G5 region; sequence SAL.

Belongs to the TRAFAC class translation factor GTPase superfamily. Classic translation factor GTPase family. IF-2 subfamily.

It localises to the cytoplasm. Functionally, one of the essential components for the initiation of protein synthesis. Protects formylmethionyl-tRNA from spontaneous hydrolysis and promotes its binding to the 30S ribosomal subunits. Also involved in the hydrolysis of GTP during the formation of the 70S ribosomal complex. This chain is Translation initiation factor IF-2, found in Acidothermus cellulolyticus (strain ATCC 43068 / DSM 8971 / 11B).